A 1074-amino-acid chain; its full sequence is Probable phospholipid-transporting ATPase tat-5 (1074 aa).

The tract at residues 1 to 26 (MGKRKKNDESSSSSSQKPCVSSSSDD) is disordered. Positions 10–26 (SSSSSSQKPCVSSSSDD) are enriched in low complexity. Helical transmembrane passes span 118 to 138 (FVPI…FLLM), 143 to 163 (FIPA…GFVL), 354 to 374 (LTKL…AMKG), and 378 to 398 (LWYR…PISL). Asp442 (4-aspartylphosphate intermediate) is an active-site residue. Residues Asp442, Lys443, Thr444, Glu524, Phe570, Lys575, Lys594, Arg623, Thr624, Thr704, Gly705, Asp706, Arg786, and Lys792 each coordinate ATP. Asp442 lines the Mg(2+) pocket. Thr444 provides a ligand contact to Mg(2+). Asp813 contacts Mg(2+). ATP contacts are provided by Asn816 and Asp817. Residue Asp817 participates in Mg(2+) binding. The next 5 helical transmembrane spans lie at 886–906 (AIFS…VLMV), 954–974 (IWVL…LLVF), 978–998 (FIHV…IMVA), 1006–1026 (WAML…LILF), and 1038–1058 (WVFI…LYIV).

Belongs to the cation transport ATPase (P-type) (TC 3.A.3) family. Type IV subfamily. It depends on Mg(2+) as a cofactor.

Its subcellular location is the cell membrane. It catalyses the reaction ATP + H2O + phospholipidSide 1 = ADP + phosphate + phospholipidSide 2.. Plays a role in regulating membrane trafficking of cargo proteins during embryogenesis. Regulates snx-3 retromer-mediated endosomal sorting of mig-14, a transporter of Wnt egl-20 morphogen. Together with mon-2 and pad-1, may participate in the formation of endosomal carriers that direct mig-14 trafficking back to Golgi, away from lysosomal degradation. Required for Wnt egl-20 gradient formation along the anteroposterior body axis and migration of QL neuroblast descendants toward the posterior part. Maintains phosphatidylethanolamine (PE) asymmetry at the cell membrane and prevents the budding of ectosome vesicles that affect intercellular communication and morphogenesis. The sequence is that of Probable phospholipid-transporting ATPase tat-5 (tat-5) from Caenorhabditis elegans.